Here is a 356-residue protein sequence, read N- to C-terminus: Cyanide hydratase (356 aa).

Residues 6 to 285 form the CN hydrolase domain; the sequence is YKAAAVTSEP…DGLLFVDIDL (280 aa). The Proton acceptor role is filled by Glu46. Residue Lys128 is part of the active site. Residue Cys163 is the Nucleophile of the active site.

This sequence belongs to the carbon-nitrogen hydrolase superfamily. Nitrilase family. Oligomer of dimers, forming left-handed helical fibers.

The catalysed reaction is formamide = hydrogen cyanide + H2O. Functionally, catalyzes the hydration of cyanide to formamide. Degradation of cyanide may be important for plant pathogenic fungi in infection of cyanogenic plants. In Leptosphaeria maculans (Blackleg fungus), this protein is Cyanide hydratase.